Reading from the N-terminus, the 736-residue chain is Catalase-peroxidase (736 aa).

Residues 96-224 constitute a cross-link (tryptophyl-tyrosyl-methioninium (Trp-Tyr) (with M-250)); it reads WHSAGTYRTG…LAAVQMGLIY (129 aa). The Proton acceptor role is filled by His97. The tryptophyl-tyrosyl-methioninium (Tyr-Met) (with W-96) cross-link spans 224–250; the sequence is YVNPEGPDGNPDPVASGRDVRETFGRM. Position 265 (His265) interacts with heme b.

This sequence belongs to the peroxidase family. Peroxidase/catalase subfamily. Homodimer or homotetramer. The cofactor is heme b. Formation of the three residue Trp-Tyr-Met cross-link is important for the catalase, but not the peroxidase activity of the enzyme.

It carries out the reaction H2O2 + AH2 = A + 2 H2O. The catalysed reaction is 2 H2O2 = O2 + 2 H2O. In terms of biological role, bifunctional enzyme with both catalase and broad-spectrum peroxidase activity. The protein is Catalase-peroxidase of Pelobacter propionicus (strain DSM 2379 / NBRC 103807 / OttBd1).